Here is a 72-residue protein sequence, read N- to C-terminus: Sec-independent protein translocase protein TatA (72 aa).

The chain crosses the membrane as a helical span at residues M1 to G21. Positions M43–S72 are disordered. Basic and acidic residues predominate over residues E50–S72.

It belongs to the TatA/E family. As to quaternary structure, the Tat system comprises two distinct complexes: a TatABC complex, containing multiple copies of TatA, TatB and TatC subunits, and a separate TatA complex, containing only TatA subunits. Substrates initially bind to the TatABC complex, which probably triggers association of the separate TatA complex to form the active translocon.

It localises to the cell inner membrane. Its function is as follows. Part of the twin-arginine translocation (Tat) system that transports large folded proteins containing a characteristic twin-arginine motif in their signal peptide across membranes. TatA could form the protein-conducting channel of the Tat system. This is Sec-independent protein translocase protein TatA from Brucella suis biovar 1 (strain 1330).